Here is a 143-residue protein sequence, read N- to C-terminus: Succinate dehydrogenase assembly factor 2, mitochondrial (143 aa).

The protein belongs to the SDHAF2 family. In terms of assembly, interacts with the flavoprotein subunit within the SDH catalytic dimer.

The protein resides in the mitochondrion matrix. Its function is as follows. Plays an essential role in the assembly of succinate dehydrogenase (SDH), an enzyme complex (also referred to as respiratory complex II) that is a component of both the tricarboxylic acid (TCA) cycle and the mitochondrial electron transport chain, and which couples the oxidation of succinate to fumarate with the reduction of ubiquinone (coenzyme Q) to ubiquinol. Required for flavinylation (covalent attachment of FAD) of the flavoprotein subunit of the SDH catalytic dimer. The sequence is that of Succinate dehydrogenase assembly factor 2, mitochondrial from Schizosaccharomyces japonicus (strain yFS275 / FY16936) (Fission yeast).